We begin with the raw amino-acid sequence, 215 residues long: High mobility group protein B1 (215 aa).

Residue 1-10 participates in heparin binding; it reads MGKGDPKKPR. Residues 1-97 form a sufficient for interaction with HAVCR2 region; it reads MGKGDPKKPR…KFKDPNAPKR (97 aa). Residues Lys-3, Lys-7, Lys-8, and Lys-12 each carry the N6-acetyllysine modification. Residues 3–15 form an LPS binding (delipidated) region; it reads KGDPKKPRGKMSS. Positions 9–79 form a DNA-binding region, HMG box 1; it reads PRGKMSSYAF…RYEREMKTYI (71 aa). Cys-23 is modified (cysteine sulfonic acid (-SO3H); alternate). Cysteines 23 and 45 form a disulfide. The tract at residues 27–43 is NLS 1; it reads HKKKHPDASVNFSEFSK. Residues 27-43 carry the Nuclear localization signal (NLS) 1 motif; sequence HKKKHPDASVNFSEFSK. N6-acetyllysine occurs at positions 28, 29, and 30. Residue Lys-28 forms an Isoglutamyl lysine isopeptide (Lys-Gln) (interchain with Q-?) linkage. At Ser-35 the chain carries Phosphoserine. Lys-43 is subject to N6-acetyllysine. Isoglutamyl lysine isopeptide (Lys-Gln) (interchain with Q-?) cross-links involve residues Lys-43 and Lys-44. Cys-45 bears the Cysteine sulfonic acid (-SO3H); alternate mark. Residue Lys-68 forms an Isoglutamyl lysine isopeptide (Lys-Gln) (interchain with Q-?) linkage. The interval 76-95 is disordered; the sequence is KTYIPPKGETKKKFKDPNAP. Residues 80–96 are LPS binding (Lipid A); the sequence is PPKGETKKKFKDPNAPK. The span at 83-94 shows a compositional bias: basic and acidic residues; sequence GETKKKFKDPNA. The segment at 89–108 is cytokine-stimulating activity; it reads FKDPNAPKRPPSAFFLFCSE. Lys-90 is modified (N6-acetyllysine). Positions 95–163 form a DNA-binding region, HMG box 2; sequence PKRPPSAFFL…KYEKDIAAYR (69 aa). Position 100 is a phosphoserine (Ser-100). Cysteine sulfonic acid (-SO3H) is present on Cys-106. 7 positions are modified to N6-acetyllysine: Lys-127, Lys-128, Lys-141, Lys-172, Lys-173, Lys-177, and Lys-180. The binding to AGER/RAGE stretch occupies residues 150 to 183; that stretch reads KLKEKYEKDIAAYRAKGKPDAAKKGVVKAEKSKK. Residues 161 to 179 show a composition bias toward basic and acidic residues; the sequence is AYRAKGKPDAAKKGVVKAE. The tract at residues 161–215 is disordered; sequence AYRAKGKPDAAKKGVVKAEKSKKKKEEEDDEEDEEDEEEEEEEEDEDEEEDDDDE. The NLS 2 stretch occupies residues 178–184; it reads AEKSKKK. A Nuclear localization signal (NLS) 2 motif is present at residues 178 to 184; sequence AEKSKKK. An Isoglutamyl lysine isopeptide (Lys-Gln) (interchain with Q-?) cross-link involves residue Lys-180. Residue Ser-181 is modified to ADP-ribosylserine. An N6-acetyllysine mark is found at Lys-182, Lys-183, Lys-184, and Lys-185. Isoglutamyl lysine isopeptide (Lys-Gln) (interchain with Q-?) cross-links involve residues Lys-182, Lys-183, and Lys-184. The span at 187–215 shows a compositional bias: acidic residues; the sequence is EEDDEEDEEDEEEEEEEEDEDEEEDDDDE.

Belongs to the HMGB family. Interacts (fully reduced HMGB1) with CXCL12; probably in a 1:2 ratio involving two molecules of CXCL12, each interacting with one HMG box of HMGB1; inhibited by glycyrrhizin. Associates with the TLR4:LY96 receptor complex. Component of the RAG complex composed of core components RAG1 and RAG2, and associated component HMGB1 or HMGB2. Interacts (in cytoplasm upon starvation) with BECN1; inhibits the interaction of BECN1 and BCL2 leading to promotion of autophagy. Interacts with KPNA1; involved in nuclear import. Interacts with SREBF1, TLR2, TLR4, TLR9, APEX1, FEN1, POLB, TERT. Interacts with AGER, PTPRZ1, IL1B, MSH2, XPA, XPC, HNF1A, TP53. Interacts with CD24; the probable CD24:SIGLEC10 complex is proposed to inhibit HGMB1-mediated tissue damage immune response. Interacts with THBD; prevents HGMB1 interaction with ACER/RAGE and inhibits HGMB1 pro-inflammatory activity. Interacts with HAVCR2; impairs HMGB1 binding to B-DNA and likely HMGB1-mediated innate immune response. Interacts with XPO1; mediating nuclear export. Interacts with receptor RAGE/AGER. Post-translationally, acetylated on multiple sites upon stimulation with LPS. Acetylation on lysine residues in the nuclear localization signals (NLS 1 and NLS 2) leads to cytoplasmic localization and subsequent secretion. Acetylation on Lys-3 results in preferential binding to DNA ends and impairs DNA bending activity. Phosphorylated at serine residues. Phosphorylation in both NLS regions is required for cytoplasmic translocation followed by secretion. In terms of processing, reduction/oxidation of cysteine residues Cys-23, Cys-45 and Cys-106 and a possible intramolecular disulfide bond involving Cys-23 and Cys-45 give rise to different redox forms with specific functional activities in various cellular compartments: 1- Fully reduced HGMB1 (HMGB1C23hC45hC106h), 2- Disulfide HMGB1 (HMGB1C23-C45C106h) and 3- Sulfonyl HMGB1 (HMGB1C23soC45soC106so). Post-translationally, poly-ADP-ribosylated by PARP1 when secreted following stimulation with LPS. In vitro cleavage by CASP1 is liberating a HMG box 1-containing peptide which may mediate immunogenic activity; the peptide antagonizes apoptosis-induced immune tolerance. Can be proteolytically cleaved by a thrombin:thrombomodulin complex; reduces binding to heparin and pro-inflammatory activities. In terms of processing, forms covalent cross-links mediated by transglutaminase TGM2, between a glutamine and the epsilon-amino group of a lysine residue, forming homopolymers and heteropolymers. As to expression, serum levels are found elevated in mice with modeled systemic lupus erythematosus (SLE) and are correlated with SLE disease activity.

It localises to the nucleus. The protein resides in the cytoplasm. It is found in the chromosome. The protein localises to the cell membrane. Its subcellular location is the endosome. It localises to the endoplasmic reticulum-Golgi intermediate compartment. The protein resides in the secreted. In terms of biological role, multifunctional redox sensitive protein with various roles in different cellular compartments. In the nucleus is one of the major chromatin-associated non-histone proteins and acts as a DNA chaperone involved in replication, transcription, chromatin remodeling, V(D)J recombination, DNA repair and genome stability. Proposed to be an universal biosensor for nucleic acids. Promotes host inflammatory response to sterile and infectious signals and is involved in the coordination and integration of innate and adaptive immune responses. In the cytoplasm functions as a sensor and/or chaperone for immunogenic nucleic acids implicating the activation of TLR9-mediated immune responses, and mediates autophagy. Acts as a danger associated molecular pattern (DAMP) molecule that amplifies immune responses during tissue injury. Released to the extracellular environment can bind DNA, nucleosomes, IL-1 beta, CXCL12, AGER isoform 2/sRAGE, lipopolysaccharide (LPS) and lipoteichoic acid (LTA), and activates cells through engagement of multiple surface receptors. In the extracellular compartment fully reduced HMGB1 (released by necrosis) acts as a chemokine, disulfide HMGB1 (actively secreted) as a cytokine, and sulfonyl HMGB1 (released from apoptotic cells) promotes immunological tolerance. Has proangiogenic activity. May be involved in platelet activation. Binds to phosphatidylserine and phosphatidylethanolamide. Bound to RAGE mediates signaling for neuronal outgrowth. May play a role in accumulation of expanded polyglutamine (polyQ) proteins. Its function is as follows. Nuclear functions are attributed to fully reduced HGMB1. Associates with chromatin and binds DNA with a preference to non-canonical DNA structures such as single-stranded DNA, DNA-containing cruciforms or bent structures, supercoiled DNA and ZDNA. Can bent DNA and enhance DNA flexibility by looping thus providing a mechanism to promote activities on various gene promoters by enhancing transcription factor binding and/or bringing distant regulatory sequences into close proximity. May be involved in nucleotide excision repair (NER), mismatch repair (MMR) and base excision repair (BER) pathways, and double strand break repair such as non-homologous end joining (NHEJ). Involved in V(D)J recombination by acting as a cofactor of the RAG complex: acts by stimulating cleavage and RAG protein binding at the 23 bp spacer of conserved recombination signal sequences (RSS). In vitro can displace histone H1 from highly bent DNA. Can restructure the canonical nucleosome leading to relaxation of structural constraints for transcription factor-binding. Enhances binding of sterol regulatory element-binding proteins (SREBPs) such as SREBF1 to their cognate DNA sequences and increases their transcriptional activities. Facilitates binding of TP53 to DNA. Proposed to be involved in mitochondrial quality control and autophagy in a transcription-dependent fashion implicating HSPB1; however, this function has been questioned. Can modulate the activity of the telomerase complex and may be involved in telomere maintenance. In the cytoplasm proposed to dissociate the BECN1:BCL2 complex via competitive interaction with BECN1 leading to autophagy activation. Can protect BECN1 and ATG5 from calpain-mediated cleavage and thus proposed to control their proautophagic and proapoptotic functions and to regulate the extent and severity of inflammation-associated cellular injury. In myeloid cells has a protective role against endotoxemia and bacterial infection by promoting autophagy. Involved in endosomal translocation and activation of TLR9 in response to CpG-DNA in macrophages. Functionally, in the extracellular compartment (following either active secretion or passive release) involved in regulation of the inflammatory response. Fully reduced HGMB1 (which subsequently gets oxidized after release) in association with CXCL12 mediates the recruitment of inflammatory cells during the initial phase of tissue injury; the CXCL12:HMGB1 complex triggers CXCR4 homodimerization. Induces the migration of monocyte-derived immature dendritic cells and seems to regulate adhesive and migratory functions of neutrophils implicating AGER/RAGE and ITGAM. Can bind to various types of DNA and RNA including microbial unmethylated CpG-DNA to enhance the innate immune response to nucleic acids. Proposed to act in promiscuous DNA/RNA sensing which cooperates with subsequent discriminative sensing by specific pattern recognition receptors. Promotes extracellular DNA-induced AIM2 inflammasome activation implicating AGER/RAGE. Disulfide HMGB1 binds to transmembrane receptors, such as AGER/RAGE, TLR2, TLR4 and probably TREM1, thus activating their signal transduction pathways. Mediates the release of cytokines/chemokines such as TNF, IL-1, IL-6, IL-8, CCL2, CCL3, CCL4 and CXCL10. Promotes secretion of interferon-gamma by macrophage-stimulated natural killer (NK) cells in concert with other cytokines like IL-2 or IL-12. TLR4 is proposed to be the primary receptor promoting macrophage activation and signaling through TLR4 seems to implicate LY96/MD-2. In bacterial LPS- or LTA-mediated inflammatory responses binds to the endotoxins and transfers them to CD14 for signaling to the respective TLR4:LY96 and TLR2 complexes. Contributes to tumor proliferation by association with ACER/RAGE. Can bind to IL1-beta and signals through the IL1R1:IL1RAP receptor complex. Binding to class A CpG activates cytokine production in plasmacytoid dendritic cells implicating TLR9, MYD88 and AGER/RAGE and can activate autoreactive B cells. Via HMGB1-containing chromatin immune complexes may also promote B cell responses to endogenous TLR9 ligands through a B-cell receptor (BCR)-dependent and ACER/RAGE-independent mechanism. Inhibits phagocytosis of apoptotic cells by macrophages; the function is dependent on poly-ADP-ribosylation and involves binding to phosphatidylserine on the cell surface of apoptotic cells. In adaptive immunity may be involved in enhancing immunity through activation of effector T-cells and suppression of regulatory T (TReg) cells. In contrast, without implicating effector or regulatory T-cells, required for tumor infiltration and activation of T-cells expressing the lymphotoxin LTA:LTB heterotrimer thus promoting tumor malignant progression. Also reported to limit proliferation of T-cells. Released HMGB1:nucleosome complexes formed during apoptosis can signal through TLR2 to induce cytokine production. Involved in induction of immunological tolerance by apoptotic cells; its pro-inflammatory activities when released by apoptotic cells are neutralized by reactive oxygen species (ROS)-dependent oxidation specifically on Cys-106. During macrophage activation by activated lymphocyte-derived self apoptotic DNA (ALD-DNA) promotes recruitment of ALD-DNA to endosomes. The protein is High mobility group protein B1 (Hmgb1) of Mus musculus (Mouse).